A 230-amino-acid chain; its full sequence is Heptaprenylglyceryl phosphate synthase (230 aa).

Lys12 lines the sn-glycerol 1-phosphate pocket. Positions 14 and 40 each coordinate Mg(2+). Sn-glycerol 1-phosphate is bound by residues 159 to 164 (YIEYSG), Gly189, and 209 to 210 (GD).

It belongs to the GGGP/HepGP synthase family. Group I subfamily. In terms of assembly, homodimer. Requires Mg(2+) as cofactor.

The enzyme catalyses sn-glycerol 1-phosphate + all-trans-heptaprenyl diphosphate = 3-heptaprenyl-sn-glycero-1-phosphate + diphosphate. Its pathway is membrane lipid metabolism; glycerophospholipid metabolism. Prenyltransferase that catalyzes in vivo the transfer of the heptaprenyl moiety of heptaprenyl pyrophosphate (HepPP; 35 carbon atoms) to the C3 hydroxyl of sn-glycerol-1-phosphate (G1P), producing heptaprenylglyceryl phosphate (HepGP). This reaction is an ether-bond-formation step in the biosynthesis of archaea-type G1P-based membrane lipids found in Bacillales. This chain is Heptaprenylglyceryl phosphate synthase, found in Staphylococcus aureus (strain Mu3 / ATCC 700698).